Consider the following 37-residue polypeptide: Calcitonin gene-related peptide (37 aa).

A disulfide bridge connects residues cysteine 2 and cysteine 7. Phenylalanine 37 bears the Phenylalanine amide mark.

This sequence belongs to the calcitonin family.

Functionally, CGRP induces vasodilation. It dilates a variety of vessels including the coronary, cerebral and systemic vasculature. Its abundance in the CNS also points toward a neurotransmitter or neuromodulator role. This is Calcitonin gene-related peptide from Pelophylax ridibundus (Marsh frog).